A 286-amino-acid polypeptide reads, in one-letter code: 3-hydroxybutyryl-CoA dehydrogenase (286 aa).

It belongs to the 3-hydroxyacyl-CoA dehydrogenase family.

It catalyses the reaction 3-hydroxybutanoyl-CoA + NAD(+) = acetoacetyl-CoA + NADH + H(+). The enzyme catalyses (3S)-3-hydroxybutanoyl-CoA + NADP(+) = acetoacetyl-CoA + NADPH + H(+). It participates in lipid metabolism; butanoate metabolism. This Mycobacterium tuberculosis (strain CDC 1551 / Oshkosh) protein is 3-hydroxybutyryl-CoA dehydrogenase (fadB2).